The sequence spans 240 residues: Putative peptidoglycan hydrolase Rv2525c (240 aa).

The segment at residues 1 to 33 (MSVSRRDVLKFAAATPGVLGLGVVASSLRAAPA) is a signal peptide (tat-type signal).

Predicted to be exported by the Tat system. The position of the signal peptide cleavage has not been experimentally proven.

Its subcellular location is the secreted. It catalyses the reaction Hydrolysis of (1-&gt;4)-beta-linkages between N-acetylmuramic acid and N-acetyl-D-glucosamine residues in a peptidoglycan and between N-acetyl-D-glucosamine residues in chitodextrins.. It functions in the pathway cell wall degradation; peptidoglycan degradation. May function as a peptidoglycan hydrolase with glycosidase activity. In vitro, displays esterase activity toward p-nitrophenyl esters of various acyl chain length (C4 to C16), with a preference for p-nitrophenyl butyrate (C4). In Mycobacterium tuberculosis (strain ATCC 25618 / H37Rv), this protein is Putative peptidoglycan hydrolase Rv2525c.